Consider the following 274-residue polypeptide: Diaminopimelate epimerase (274 aa).

Residues N11, Q44, and N64 each contribute to the substrate site. C73 acts as the Proton donor in catalysis. Substrate is bound by residues 74–75 (GN), N157, N190, and 208–209 (ER). The active-site Proton acceptor is C217. 218–219 (GS) provides a ligand contact to substrate.

It belongs to the diaminopimelate epimerase family. In terms of assembly, homodimer.

It is found in the cytoplasm. The enzyme catalyses (2S,6S)-2,6-diaminopimelate = meso-2,6-diaminopimelate. It functions in the pathway amino-acid biosynthesis; L-lysine biosynthesis via DAP pathway; DL-2,6-diaminopimelate from LL-2,6-diaminopimelate: step 1/1. Catalyzes the stereoinversion of LL-2,6-diaminopimelate (L,L-DAP) to meso-diaminopimelate (meso-DAP), a precursor of L-lysine and an essential component of the bacterial peptidoglycan. The protein is Diaminopimelate epimerase of Haemophilus influenzae (strain PittGG).